The chain runs to 1816 residues: Kinesin-like protein KIF1B (1816 aa).

At Ser2 the chain carries N-acetylserine. Residues 5-354 (SVKVAVRVRP…LRYADRAKQI (350 aa)) form the Kinesin motor domain. 97-104 (GQTGAGKS) is an ATP binding site. Residues 270 to 350 (NINKSLTTLG…TLSTLRYADR (81 aa)) form an interaction with KIFBP region. The disordered stretch occupies residues 431–450 (FSTASMGSLTSSPSSCSLNS). The segment covering 432-450 (STASMGSLTSSPSSCSLNS) has biased composition (low complexity). Residues 470–512 (GEEAIERLKESEKIIAELNETWEEKLRKTEAIRMEREALLAEM) adopt a coiled-coil conformation. One can recognise an FHA domain in the interval 556–612 (TRVGQADAERRQDIVLSGAHIKEEHCIFRSERNNTGEVIVTLEPCERSETYVNGKRV). Phosphothreonine occurs at positions 647 and 652. Residues 672 to 731 (IDMKQEMEKRLQEMEILYKREKEEADLLLEQQRLDYESKLQALQKQVETRSLAAETTEEE) are a coiled coil. 5 positions are modified to phosphoserine: Ser1054, Ser1057, Ser1416, Ser1454, and Ser1487. The interval 1550-1570 (STTTFESAITPSESSGYDSAD) is disordered. Residues Ser1573, Ser1603, Ser1610, and Ser1613 each carry the phosphoserine modification. Positions 1620–1637 (SVSSFSSSTLTPSSTCPS) are enriched in low complexity. Residues 1620–1659 (SVSSFSSSTLTPSSTCPSLVDSRSSSMDQKTPEANSRASS) are disordered. Polar residues predominate over residues 1640–1659 (DSRSSSMDQKTPEANSRASS). Positions 1701–1799 (VVSKKGYLHF…WLYAFNPLLA (99 aa)) constitute a PH domain.

Belongs to the TRAFAC class myosin-kinesin ATPase superfamily. Kinesin family. Unc-104 subfamily. In terms of assembly, monomer. Interacts with KIFBP; positively regulates KIF1B microtubule motor activity. Interacts (via C-terminus end of the kinesin-motor domain) with CHP1; the interaction occurs in a calcium-dependent manner. Interacts with MADD (via death domain); links this isoform of KIF1B to Rab3-carrying vesicles in anterograde synaptic vesicle transport. In terms of tissue distribution, expressed in the brain with lower expression in testis and liver (at protein level). Strongly expressed in the brain and ovary, with lower expression in lung, kidney, uterus, testis and liver. As to expression, isoform 2 is expressed in non-neuronal tissues.

Its subcellular location is the cytoplasm. It localises to the cytoskeleton. It is found in the cytoplasmic vesicle. The protein resides in the secretory vesicle. The protein localises to the synaptic vesicle membrane. Its subcellular location is the lysosome. The catalysed reaction is ATP + H2O + a kinesin associated with a microtubule at position (n) = ADP + phosphate a kinesin associated with a microtubule at position (n+1, toward the plus end).. Its function is as follows. Has a plus-end-directed microtubule motor activity and functions as a motor for transport of vesicles and organelles along microtubules. Has a plus-end-directed microtubule motor activity and functions as a motor for anterograde synaptic vesicle transport along axonal microtubules from the cell body to the presynapse in neuronal cells. In terms of biological role, has a plus-end-directed microtubule motor activity and functions as a motor for the translocation of lysosomes from perinuclear regions to the cell periphery. The polypeptide is Kinesin-like protein KIF1B (Rattus norvegicus (Rat)).